The chain runs to 398 residues: Phosphoglycerate kinase (398 aa).

Residues 22-24, Arg38, 61-64, Arg120, and Arg153 contribute to the substrate site; these read DFN and HLGR. Residues Lys204, Glu326, and 352-355 contribute to the ATP site; that span reads GGDT.

Belongs to the phosphoglycerate kinase family. As to quaternary structure, monomer.

It is found in the cytoplasm. The enzyme catalyses (2R)-3-phosphoglycerate + ATP = (2R)-3-phospho-glyceroyl phosphate + ADP. It participates in carbohydrate degradation; glycolysis; pyruvate from D-glyceraldehyde 3-phosphate: step 2/5. This chain is Phosphoglycerate kinase, found in Geobacter metallireducens (strain ATCC 53774 / DSM 7210 / GS-15).